A 622-amino-acid polypeptide reads, in one-letter code: Glutamyl-tRNA(Gln) amidotransferase subunit E (622 aa).

This sequence belongs to the GatB/GatE family. GatE subfamily. Heterodimer of GatD and GatE.

It carries out the reaction L-glutamyl-tRNA(Gln) + L-glutamine + ATP + H2O = L-glutaminyl-tRNA(Gln) + L-glutamate + ADP + phosphate + H(+). Functionally, allows the formation of correctly charged Gln-tRNA(Gln) through the transamidation of misacylated Glu-tRNA(Gln) in organisms which lack glutaminyl-tRNA synthetase. The reaction takes place in the presence of glutamine and ATP through an activated gamma-phospho-Glu-tRNA(Gln). The GatDE system is specific for glutamate and does not act on aspartate. This is Glutamyl-tRNA(Gln) amidotransferase subunit E from Halobacterium salinarum (strain ATCC 29341 / DSM 671 / R1).